The chain runs to 123 residues: Small ribosomal subunit protein uS12 (123 aa).

Position 89 is a 3-methylthioaspartic acid (D89).

This sequence belongs to the universal ribosomal protein uS12 family. In terms of assembly, part of the 30S ribosomal subunit. Contacts proteins S8 and S17. May interact with IF1 in the 30S initiation complex.

Its function is as follows. With S4 and S5 plays an important role in translational accuracy. In terms of biological role, interacts with and stabilizes bases of the 16S rRNA that are involved in tRNA selection in the A site and with the mRNA backbone. Located at the interface of the 30S and 50S subunits, it traverses the body of the 30S subunit contacting proteins on the other side and probably holding the rRNA structure together. The combined cluster of proteins S8, S12 and S17 appears to hold together the shoulder and platform of the 30S subunit. This Acidiphilium cryptum (strain JF-5) protein is Small ribosomal subunit protein uS12.